The chain runs to 273 residues: 5-deoxy-glucuronate isomerase (273 aa).

Belongs to the isomerase IolB family.

The enzyme catalyses 5-deoxy-D-glucuronate = 5-dehydro-2-deoxy-D-gluconate. It functions in the pathway polyol metabolism; myo-inositol degradation into acetyl-CoA; acetyl-CoA from myo-inositol: step 4/7. Functionally, involved in the isomerization of 5-deoxy-glucuronate (5DG) to 5-dehydro-2-deoxy-D-gluconate (DKG or 2-deoxy-5-keto-D-gluconate). This is 5-deoxy-glucuronate isomerase from Listeria monocytogenes serotype 4a (strain HCC23).